Here is a 1085-residue protein sequence, read N- to C-terminus: Extracellular calcium-sensing receptor (1085 aa).

Positions 1 to 19 (MALYSCCWILLAFSTWCTS) are cleaved as a signal peptide. Topologically, residues 20-611 (AYGPDQRAQK…KEIEFLSWTE (592 aa)) are extracellular. Residues 23–189 (PDQRAQKKGD…QFKSFLRTIP (167 aa)) form a ligand-binding 1 (LB1) region. Cys61 and Cys102 are joined by a disulfide. Position 67–71 (67–71 (RGFRW)) interacts with phosphate. Residues Ile82, Ser85, Leu88, and Leu89 each contribute to the Ca(2+) site. Asn91 is a glycosylation site (N-linked (GlcNAc...) asparagine). Thr101 lines the Ca(2+) pocket. N-linked (GlcNAc...) asparagine glycosylation is present at Asn131. Thr146 lines the Ca(2+) pocket. L-tryptophan is bound by residues Ser148, Ala169, and Ser171. Ca(2+) contacts are provided by Ser171, Pro189, Asp191, Glu232, and Asp235. A ligand-binding 2 (LB2) region spans residues 190–325 (NDEHQATAMA…GGTIGFGLKA (136 aa)). 7 disulfides stabilise this stretch: Cys237–Cys562, Cys359–Cys396, Cys438–Cys450, Cys543–Cys563, Cys547–Cys566, Cys569–Cys583, and Cys586–Cys599. Residues Asp239 and Ser241 each contribute to the spermine site. Residues Asn262 and Asn288 are each glycosylated (N-linked (GlcNAc...) asparagine). Glu298 provides a ligand contact to Ca(2+). Glu298 provides a ligand contact to L-tryptophan. Asn401 carries an N-linked (GlcNAc...) asparagine glycan. Position 416 to 418 (416 to 418 (RIS)) interacts with phosphate. N-linked (GlcNAc...) asparagine glycans are attached at residues Asn447, Asn469, and Asn489. Tyr490 contacts Ca(2+). A glycan (N-linked (GlcNAc...) asparagine) is linked at Asn542. Positions 543–613 (CSRDCLAGTR…IEFLSWTEPF (71 aa)) are cysteine-rich (CR). A Ca(2+)-binding site is contributed by Gly558. Asn595 is a glycosylation site (N-linked (GlcNAc...) asparagine). Residues 612–637 (PFGIALTLFAVLGIFLTAFVLGVFIK) traverse the membrane as a helical segment. At 638 to 649 (FRNTPIVKATNR) the chain is on the cytoplasmic side. The intracellular loop 1 (ICL1) stretch occupies residues 638 to 649 (FRNTPIVKATNR). The helical transmembrane segment at 650 to 669 (ELSYLLLFSLLCCFSSSLFF) threads the bilayer. The Extracellular portion of the chain corresponds to 670 to 675 (IGEPQD). A helical transmembrane segment spans residues 676–699 (WTCRLRQPAFGISFVLCISCILVK). The Cytoplasmic portion of the chain corresponds to 700-723 (TNRVLLVFEAKIPTSFHRKWWGLN). The segment at 700-723 (TNRVLLVFEAKIPTSFHRKWWGLN) is intracellular loop 2 (ICL2). Residues 724–746 (LQFLLVFLCTFMQIVICAIWLNT) traverse the membrane as a helical segment. Residues 747-770 (APPSSYRNHELEDEIIFITCHEGS) are Extracellular-facing. A helical transmembrane segment spans residues 771 to 790 (LMALGFLIGYTCLLAAICFF). At 791–806 (FAFKSRKLPENFNEAK) the chain is on the cytoplasmic side. An intracellular loop 3 (ICL3) region spans residues 791 to 806 (FAFKSRKLPENFNEAK). The chain crosses the membrane as a helical span at residues 807–829 (FITFSMLIFFIVWISFIPAYAST). The Extracellular portion of the chain corresponds to 830–833 (YGKF). A helical transmembrane segment spans residues 834–855 (VSAVEVIAILAASFGLLACIFF). The Cytoplasmic segment spans residues 856-1085 (NKVYIILFKP…STVTENMLRS (230 aa)). The tract at residues 856-1085 (NKVYIILFKP…STVTENMLRS (230 aa)) is C-terminus. Residues 881–901 (AFKVAARATLRRSNVSRQRSS) form an interaction with RNF19A region. Thr889 is subject to Phosphothreonine. The interval 891-899 (RRSNVSRQR) is arginine-rich retention motif. A phosphoserine mark is found at Ser893, Ser900, and Ser921. Residues 893–938 (SNVSRQRSSSLGGSTGSTPSSSISSKSNSEDPFPQQQPKRQKQPQP) are compositionally biased toward low complexity. Disordered regions lie at residues 893-969 (SNVS…PPRC) and 1034-1058 (SQET…EEMS). Over residues 950-960 (QPRPPSTPQPQ) the composition is skewed to pro residues. A Phosphoserine modification is found at Ser1068.

This sequence belongs to the G-protein coupled receptor 3 family. As to quaternary structure, homodimer; disulfide-linked. Interacts with VCP. Interacts with ARRB1. Phosphorylation at Thr-889 by PKC impairs coupling with G(q)/G(11) G-proteins, while it does not affect G(i)/G(o)-coupling. Phosphorylation at Ser-893 by PKC and Ser-900 by PKA promote plasma membrane localization. In terms of processing, ubiquitinated by RNF19A; which induces proteasomal degradation.

It localises to the cell membrane. In resting state, adopts an open conformation, anion-binding promoting the inactive configuration. Upon aromatic amino acid-binding, the groove in the extracellular venus flytrap module is closed, thereby inducing the formation of a novel homodimer interface between subunits. Calcium ions stabilize the active state by enhancing homodimer interactions between membrane-proximal domains to fully activate the receptor. Upon activation, the homodimer adopts an asymmetric configuration of the 7-transmembrane region that primes one protomer for G-protein coupling. G-protein binding expands the transmembrane dimer interface; the restriction imposed by the receptor dimer, in combination with intracellular loop 2 (ICL2), enables G-protein activation by facilitating conformational transition of G-protein alpha. Coupling to different classes of G-proteins results in distinct CASR-G-protein interfaces. G-protein-coupled receptor that senses changes in the extracellular concentration of calcium ions and plays a key role in maintaining calcium homeostasis. Senses fluctuations in the circulating calcium concentration: activated by elevated circulating calcium, leading to decreased parathyroid hormone (PTH) secretion in parathyroid glands. In kidneys, acts as a key regulator of renal tubular calcium resorption. Ligand binding causes a conformation change that triggers signaling via guanine nucleotide-binding proteins (G-proteins) and modulates the activity of downstream effectors. CASR is coupled with different G(q)/G(11), G(i)/G(o)- or G(s)-classes of G-proteins depending on the context. In the parathyroid and kidney, CASR signals through G(q)/G(11) and G(i)/G(o) G-proteins: G(q)/G(11) coupling activates phospholipase C-beta, releasing diacylglycerol (DAG) and inositol 1,4,5-trisphosphate (IP3) second messengers, while G(i)/G(o) coupling mediates inhibition of adenylate cyclase activity. The G-protein-coupled receptor activity is activated by a co-agonist mechanism: aromatic amino acids, such as Trp or Phe, act concertedly with divalent cations, such as calcium or magnesium, to achieve full receptor activation. Acts as an activator of the NLRP3 inflammasome via G(i)/G(o)-mediated signaling: down-regulation of cyclic AMP (cAMP) relieving NLRP3 inhibition by cAMP. Acts as a regulator of proton-sensing receptor GPR68 in a seesaw manner: CASR-mediated signaling inhibits GPR68 signaling in response to extracellular calcium, while GPR68 inhibits CASR in presence of extracellular protons. The chain is Extracellular calcium-sensing receptor (CASR) from Bos taurus (Bovine).